The sequence spans 343 residues: 2-alkenal reductase (NADP(+)-dependent) (343 aa).

Residues tyrosine 55 and tyrosine 80 each contribute to the substrate site. NADP(+)-binding positions include 165 to 166 (AV), glycine 186, lysine 190, tyrosine 206, asparagine 230, cysteine 252, tyrosine 258, 282 to 284 (FLV), and asparagine 332.

It belongs to the NADP-dependent oxidoreductase L4BD family. As to quaternary structure, homodimer.

It carries out the reaction an n-alkanal + NADP(+) = an alk-2-enal + NADPH + H(+). In terms of biological role, reduces the C=C double bonds of alpha, beta unsaturated enones, but has no activity on enones with an endocyclic C=C double-bond. Shows a high specificity for NADPH as the hybrid donor. Substrates are 1-nitrocyclohexene, 2-methylpentenal, trans-cinnamaldehyde, methyl-trans-2-methylcinnamaldehyde, trans-2-nonenal and 1-octen-3-one. Reduced activity with aplha-methyl transcinnamaldehyde, 1-cyclohexene-1-carboxaldehyde, methyl crotonate, (R)-pulegone, and dimethyl itaconate and no activity with maleimides, citral, (5R)- or (5S)-carvone, (S)-perillyl alcohol, and substituted cyclohexenones and cyclopentenones. May also act as a allyl-alcohol dehydrogenase by catalyzing the dehydrogenation of secondary allylic alcohols rather than saturated secondary alcohols. Allyl-alcohol dehydrogenase is specific for the S-stereoisomer of the alcohols. The chain is 2-alkenal reductase (NADP(+)-dependent) (DBR) from Nicotiana tabacum (Common tobacco).